We begin with the raw amino-acid sequence, 418 residues long: Tyrosine--tRNA ligase (418 aa).

Y39 serves as a coordination point for L-tyrosine. Residues 44 to 53 (CTAASLHVGH) carry the 'HIGH' region motif. L-tyrosine is bound by residues Y176 and Q180. Residues 236–240 (KMGKT) carry the 'KMSKS' region motif. Residue K239 participates in ATP binding. The 69-residue stretch at 350–418 (IGVLVAFAEK…KKKHVLLRLA (69 aa)) folds into the S4 RNA-binding domain.

This sequence belongs to the class-I aminoacyl-tRNA synthetase family. TyrS type 1 subfamily. In terms of assembly, homodimer.

The protein resides in the cytoplasm. The enzyme catalyses tRNA(Tyr) + L-tyrosine + ATP = L-tyrosyl-tRNA(Tyr) + AMP + diphosphate + H(+). In terms of biological role, catalyzes the attachment of tyrosine to tRNA(Tyr) in a two-step reaction: tyrosine is first activated by ATP to form Tyr-AMP and then transferred to the acceptor end of tRNA(Tyr). The polypeptide is Tyrosine--tRNA ligase (Rhodopseudomonas palustris (strain ATCC BAA-98 / CGA009)).